The chain runs to 81 residues: MKQSLCLAVLFLILSTSSSAIRRGKEDQEINPLVSATSVEEDSVNKLMGMEYCGEGDEECLRRRMMTESHLDYIYTQHHKH.

Positions 1-20 (MKQSLCLAVLFLILSTSSSA) are cleaved as a signal peptide. A propeptide spanning residues 21 to 72 (IRRGKEDQEINPLVSATSVEEDSVNKLMGMEYCGEGDEECLRRRMMTESHLD) is cleaved from the precursor. Tyr-73 and Tyr-75 each carry sulfotyrosine. Residues 78 to 81 (HHKH) constitute a propeptide that is removed on maturation.

This sequence belongs to the phytosulfokine family. Post-translationally, sulfation is important for activity and for the binding to a putative membrane receptor. In terms of processing, PSK-beta is an enzymatic derivative of PSK-alpha. Expressed in roots, leaves, stems, flowers and siliques. Most abundant in vascular bundles and in root tips.

It localises to the secreted. Promotes plant cell differentiation, organogenesis and somatic embryogenesis as well as cell proliferation. This chain is Putative phytosulfokines 6 (PSK6), found in Arabidopsis thaliana (Mouse-ear cress).